The primary structure comprises 485 residues: D-alanine--D-alanyl carrier protein ligase (485 aa).

ATP is bound at residue 144–145 (TS). Asp-189 contacts D-alanine. 284–289 (NTYGPT) is an ATP binding site. Val-293 serves as a coordination point for D-alanine. ATP-binding residues include Asp-365 and Lys-473. Lys-473 lines the D-alanine pocket.

The protein belongs to the ATP-dependent AMP-binding enzyme family. DltA subfamily.

Its subcellular location is the cytoplasm. The enzyme catalyses holo-[D-alanyl-carrier protein] + D-alanine + ATP = D-alanyl-[D-alanyl-carrier protein] + AMP + diphosphate. Its pathway is cell wall biogenesis; lipoteichoic acid biosynthesis. Catalyzes the first step in the D-alanylation of lipoteichoic acid (LTA), the activation of D-alanine and its transfer onto the D-alanyl carrier protein (Dcp) DltC. In an ATP-dependent two-step reaction, forms a high energy D-alanyl-AMP intermediate, followed by transfer of the D-alanyl residue as a thiol ester to the phosphopantheinyl prosthetic group of the Dcp. D-alanylation of LTA plays an important role in modulating the properties of the cell wall in Gram-positive bacteria, influencing the net charge of the cell wall. The chain is D-alanine--D-alanyl carrier protein ligase from Staphylococcus aureus (strain MRSA252).